The sequence spans 170 residues: Transcription factor E (170 aa).

Residues 1 to 93 (MKEAYLYIVE…TWYVDDEIIR (93 aa)) form the HTH TFE/IIEalpha-type domain.

This sequence belongs to the TFE family. In terms of assembly, monomer. Interaction with RNA polymerase subunits RpoF and RpoE is necessary for Tfe stimulatory transcription activity. Able to interact with Tbp and RNA polymerase in the absence of DNA promoter. Interacts both with the preinitiation and elongation complexes.

In terms of biological role, transcription factor that plays a role in the activation of archaeal genes transcribed by RNA polymerase. Facilitates transcription initiation by enhancing TATA-box recognition by TATA-box-binding protein (Tbp), and transcription factor B (Tfb) and RNA polymerase recruitment. Not absolutely required for transcription in vitro, but particularly important in cases where Tbp or Tfb function is not optimal. It dynamically alters the nucleic acid-binding properties of RNA polymerases by stabilizing the initiation complex and destabilizing elongation complexes. Seems to translocate with the RNA polymerase following initiation and acts by binding to the non template strand of the transcription bubble in elongation complexes. The sequence is that of Transcription factor E from Pyrobaculum islandicum (strain DSM 4184 / JCM 9189 / GEO3).